The sequence spans 325 residues: Glutarate 2-hydroxylase (325 aa).

3 residues coordinate Fe cation: H160, D162, and H292.

It belongs to the glutarate hydroxylase family. As to quaternary structure, homotetramer. The cofactor is Fe(2+).

It catalyses the reaction glutarate + 2-oxoglutarate + O2 = (S)-2-hydroxyglutarate + succinate + CO2. It participates in amino-acid degradation. In terms of biological role, acts as an alpha-ketoglutarate-dependent dioxygenase catalyzing hydroxylation of glutarate (GA) to L-2-hydroxyglutarate (L2HG). Functions in a L-lysine degradation pathway that proceeds via cadaverine, glutarate and L-2-hydroxyglutarate. The polypeptide is Glutarate 2-hydroxylase (Citrobacter koseri (strain ATCC BAA-895 / CDC 4225-83 / SGSC4696)).